A 418-amino-acid chain; its full sequence is Nisin biosynthesis protein NisC (418 aa).

To B.subtilis SpaC and S.epidermidis EpiC.

In terms of biological role, could be implicated in the processing or the export process of the nisin lantibiotic. This is Nisin biosynthesis protein NisC (nisC) from Lactococcus lactis subsp. lactis (Streptococcus lactis).